We begin with the raw amino-acid sequence, 460 residues long: Protein btn1 (460 aa).

The next 11 helical transmembrane spans lie at 42–62 (VCVA…VILS), 76–96 (VVLL…PYFI), 105–125 (IIIF…SPPY), 135–155 (LAGI…FVGL), 164–184 (LAAW…AYAL), 195–215 (ATLL…FMVL), 287–307 (GLFF…YTIN), 323–343 (FAHF…GVFI), 356–376 (LYLP…QAVF), 378–398 (FIPS…LGGL), and 428–448 (AAGI…LCDW).

This sequence belongs to the battenin family.

The protein localises to the vacuole membrane. Functionally, involved in vacuolar transport and vacuole pH homeostasis. Also required for cytokinesis. The protein is Protein btn1 (btn1) of Aspergillus fumigatus (strain ATCC MYA-4609 / CBS 101355 / FGSC A1100 / Af293) (Neosartorya fumigata).